The chain runs to 236 residues: 2,3,4,5-tetrahydropyridine-2,6-dicarboxylate N-acetyltransferase (236 aa).

It belongs to the transferase hexapeptide repeat family. DapH subfamily.

It carries out the reaction (S)-2,3,4,5-tetrahydrodipicolinate + acetyl-CoA + H2O = L-2-acetamido-6-oxoheptanedioate + CoA. It functions in the pathway amino-acid biosynthesis; L-lysine biosynthesis via DAP pathway; LL-2,6-diaminopimelate from (S)-tetrahydrodipicolinate (acetylase route): step 1/3. In terms of biological role, catalyzes the transfer of an acetyl group from acetyl-CoA to tetrahydrodipicolinate. The polypeptide is 2,3,4,5-tetrahydropyridine-2,6-dicarboxylate N-acetyltransferase (Bacillus velezensis (strain DSM 23117 / BGSC 10A6 / LMG 26770 / FZB42) (Bacillus amyloliquefaciens subsp. plantarum)).